The primary structure comprises 216 residues: GTP cyclohydrolase 1 (216 aa).

The tract at residues 1 to 33 (MPQARGEGATPPTSLPNPSLKGVPLPDNPNNLE) is disordered. The span at 24–33 (PLPDNPNNLE) shows a compositional bias: low complexity. Residues Cys-102, His-105, and Cys-173 each coordinate Zn(2+).

The protein belongs to the GTP cyclohydrolase I family. As to quaternary structure, toroid-shaped homodecamer, composed of two pentamers of five dimers.

It carries out the reaction GTP + H2O = 7,8-dihydroneopterin 3'-triphosphate + formate + H(+). The protein operates within cofactor biosynthesis; 7,8-dihydroneopterin triphosphate biosynthesis; 7,8-dihydroneopterin triphosphate from GTP: step 1/1. This is GTP cyclohydrolase 1 (folE) from Deinococcus radiodurans (strain ATCC 13939 / DSM 20539 / JCM 16871 / CCUG 27074 / LMG 4051 / NBRC 15346 / NCIMB 9279 / VKM B-1422 / R1).